A 461-amino-acid chain; its full sequence is Gustatory and pheromone receptor 32a (461 aa).

Residues 1–100 lie on the Cytoplasmic side of the membrane; the sequence is MSPNTWVIEM…YSFFVRGVVH (100 aa). Residues 101–121 traverse the membrane as a helical segment; the sequence is ALTIFNVYSLFTPISAQLFFS. Residues 122–127 are Extracellular-facing; sequence YRETDN. Residues 128–148 form a helical membrane-spanning segment; the sequence is VNQWIELLLCILTYTLTVFVC. The Cytoplasmic portion of the chain corresponds to 149–180; that stretch reads AHNTTSMLRIMNEILQLDEEVRRQFGANLSQN. The helical transmembrane segment at 181–201 threads the bilayer; that stretch reads FGFLVKFLVGITACQAYIIVL. Topologically, residues 202–214 are extracellular; that stretch reads KIYAVQGEITPTS. A helical transmembrane segment spans residues 215–235; it reads YILLAFYGIQNGLTATYIVFA. Over 236-317 the chain is Cytoplasmic; sequence SALLRIVYIR…YKGINDCCNL (82 aa). The helical transmembrane segment at 318–338 threads the bilayer; it reads ILVSFLGYSFYTVTTNCYNLF. At 339–348 the chain is on the extracellular side; that stretch reads VQITGKGMVS. The helical transmembrane segment at 349-369 threads the bilayer; the sequence is PNILQWCFAWLCLHVSLLALL. The Cytoplasmic segment spans residues 370 to 414; the sequence is SRSCGLTTTEANATSQILARVYAKSKEYQNIIDKFLTKSIKQEVQ. A helical membrane pass occupies residues 415 to 435; the sequence is FTAYGFFAIDNSTLFKIFSAV. The Extracellular portion of the chain corresponds to 436 to 461; sequence TTYLVILIQFKQLEDSKVEDPVPEQT.

This sequence belongs to the insect chemoreceptor superfamily. Gustatory receptor (GR) family. Gr21a subfamily. In terms of tissue distribution, expressed in the adult labellar chemosensory neurons. Expressed in tarsal neurons for male-male courtship suppression. In larvae, is expressed in neurons of the terminal external chemosensory organ, and the dorsal and posterior external chemosensory organs.

The protein localises to the cell membrane. Gustatory receptor which mediates acceptance or avoidance behavior, depending on its substrates. Required for the response to N,N-Diethyl-meta-toluamide (DEET), the most widely used insect repellent worldwide. Functions as a pheromone receptor for a male inhibitory pheromone and promotes male-male aggression and suppresses male-male courtship. Also promotes preferentially virgin females courting over mated females. The chain is Gustatory and pheromone receptor 32a (Gr32a) from Drosophila melanogaster (Fruit fly).